The sequence spans 147 residues: D-aminoacyl-tRNA deacylase (147 aa).

The Gly-cisPro motif, important for rejection of L-amino acids motif lies at 136-137 (GP).

It belongs to the DTD family. Homodimer.

The protein resides in the cytoplasm. The catalysed reaction is glycyl-tRNA(Ala) + H2O = tRNA(Ala) + glycine + H(+). It carries out the reaction a D-aminoacyl-tRNA + H2O = a tRNA + a D-alpha-amino acid + H(+). An aminoacyl-tRNA editing enzyme that deacylates mischarged D-aminoacyl-tRNAs. Also deacylates mischarged glycyl-tRNA(Ala), protecting cells against glycine mischarging by AlaRS. Acts via tRNA-based rather than protein-based catalysis; rejects L-amino acids rather than detecting D-amino acids in the active site. By recycling D-aminoacyl-tRNA to D-amino acids and free tRNA molecules, this enzyme counteracts the toxicity associated with the formation of D-aminoacyl-tRNA entities in vivo and helps enforce protein L-homochirality. This chain is D-aminoacyl-tRNA deacylase, found in Streptococcus equi subsp. zooepidemicus (strain MGCS10565).